The following is a 325-amino-acid chain: Iodotyrosine dehalogenase 1 homolog (325 aa).

A helical membrane pass occupies residues 42–62 (VLNVLFTLGVILFVIYQVASL). Topologically, residues 63–325 (LHRMNKRVEK…KPVEHITKLY (263 aa)) are cytoplasmic. FMN contacts are provided by residues 135-139 (RRSCR), 163-164 (SV), 273-275 (VTS), and R315.

This sequence belongs to the nitroreductase family. It depends on FMN as a cofactor. Expressed in body-wall, anal depressor and vulval muscles.

It is found in the membrane. In terms of biological role, may contribute to coordination of muscle contraction as regulatory subunit of the nonessential sup-9 potassium channel complex. May act downstream of sup-10. In Caenorhabditis elegans, this protein is Iodotyrosine dehalogenase 1 homolog.